We begin with the raw amino-acid sequence, 87 residues long: Kappa-3-bungarotoxin (87 aa).

The signal sequence occupies residues Met1–Thr21. 5 disulfide bridges follow: Cys24–Cys42, Cys35–Cys63, Cys48–Cys52, Cys67–Cys79, and Cys80–Cys85.

It belongs to the three-finger toxin family. Long-chain subfamily. Kappa-neurotoxin sub-subfamily. Homodimer and heterodimer with kappa 2-bungarotoxin; non-covalently-linked. Expressed by the venom gland.

The protein resides in the secreted. Postsynaptic neurotoxin that binds and inhibits neuronal nicotinic acetylcholine receptors (nAChR) with high affinity (IC(50)&lt;100 nM). Is a selective, and slowly reversible antagonist of alpha-3/CHRNA3-containing and some alpha-4/CHRNA4-containing AChRs. The protein is Kappa-3-bungarotoxin of Bungarus multicinctus (Many-banded krait).